Consider the following 541-residue polypeptide: Chaperonin GroEL (541 aa).

Residues 29 to 32 (TLGP), 86 to 90 (DGTTT), glycine 413, 478 to 480 (NAA), and aspartate 494 contribute to the ATP site.

It belongs to the chaperonin (HSP60) family. Forms a cylinder of 14 subunits composed of two heptameric rings stacked back-to-back. Interacts with the co-chaperonin GroES.

It is found in the cytoplasm. The enzyme catalyses ATP + H2O + a folded polypeptide = ADP + phosphate + an unfolded polypeptide.. Its function is as follows. Together with its co-chaperonin GroES, plays an essential role in assisting protein folding. The GroEL-GroES system forms a nano-cage that allows encapsulation of the non-native substrate proteins and provides a physical environment optimized to promote and accelerate protein folding. The polypeptide is Chaperonin GroEL (Agathobacter rectalis (strain ATCC 33656 / DSM 3377 / JCM 17463 / KCTC 5835 / VPI 0990) (Eubacterium rectale)).